The primary structure comprises 172 residues: Crossover junction endodeoxyribonuclease RuvC (172 aa).

Active-site residues include aspartate 11, glutamate 71, and aspartate 143. Aspartate 11, glutamate 71, and aspartate 143 together coordinate Mg(2+).

Belongs to the RuvC family. As to quaternary structure, homodimer which binds Holliday junction (HJ) DNA. The HJ becomes 2-fold symmetrical on binding to RuvC with unstacked arms; it has a different conformation from HJ DNA in complex with RuvA. In the full resolvosome a probable DNA-RuvA(4)-RuvB(12)-RuvC(2) complex forms which resolves the HJ. The cofactor is Mg(2+).

It localises to the cytoplasm. The enzyme catalyses Endonucleolytic cleavage at a junction such as a reciprocal single-stranded crossover between two homologous DNA duplexes (Holliday junction).. Its function is as follows. The RuvA-RuvB-RuvC complex processes Holliday junction (HJ) DNA during genetic recombination and DNA repair. Endonuclease that resolves HJ intermediates. Cleaves cruciform DNA by making single-stranded nicks across the HJ at symmetrical positions within the homologous arms, yielding a 5'-phosphate and a 3'-hydroxyl group; requires a central core of homology in the junction. The consensus cleavage sequence is 5'-(A/T)TT(C/G)-3'. Cleavage occurs on the 3'-side of the TT dinucleotide at the point of strand exchange. HJ branch migration catalyzed by RuvA-RuvB allows RuvC to scan DNA until it finds its consensus sequence, where it cleaves and resolves the cruciform DNA. This chain is Crossover junction endodeoxyribonuclease RuvC, found in Brucella anthropi (strain ATCC 49188 / DSM 6882 / CCUG 24695 / JCM 21032 / LMG 3331 / NBRC 15819 / NCTC 12168 / Alc 37) (Ochrobactrum anthropi).